Here is a 399-residue protein sequence, read N- to C-terminus: Integral membrane protein GPR137B (399 aa).

A disordered region spans residues 1-22; sequence MRPERPRPRGSAPGPMETPPWD. The Lumenal portion of the chain corresponds to 1–46; it reads MRPERPRPRGSAPGPMETPPWDPARNDSLPPTLTPAVPPYVKLGLT. An N-linked (GlcNAc...) asparagine glycan is attached at N26. The chain crosses the membrane as a helical span at residues 47–67; sequence VVYTVFYALLFVFIYVQLWLV. Topologically, residues 68-79 are cytoplasmic; that stretch reads LRYRHKRLSYQS. Residues 80–100 traverse the membrane as a helical segment; that stretch reads VFLFLCLFWASLRTVLFSFYF. Over 101 to 111 the chain is Lumenal; it reads KDFVAANSLSP. A helical transmembrane segment spans residues 112-132; the sequence is FVFWLLYCFPVCLQFFTLTLM. Residues 133–159 lie on the Cytoplasmic side of the membrane; it reads NLYFTQVIFKAKSKYSPELLKYRLPLY. The helical transmembrane segment at 160 to 180 threads the bilayer; that stretch reads LASLFISLVFLLVNLTCAVLV. Topologically, residues 181–188 are lumenal; that stretch reads KTGNWERK. Residues 189–209 form a helical membrane-spanning segment; the sequence is VIVSVRVAINDTLFVLCAVSL. The Cytoplasmic segment spans residues 210 to 237; it reads SICLYKISKMSLANIYLESKGSSVCQVT. The chain crosses the membrane as a helical span at residues 238 to 258; sequence AIGVTVILLYTSRACYNLFIL. At 259–292 the chain is on the lumenal side; the sequence is SFSQNKSVHSFDYDWYNVSDQADLKNQLGDAGYV. N263 and N275 each carry an N-linked (GlcNAc...) asparagine glycan. A helical transmembrane segment spans residues 293 to 313; that stretch reads LFGVVLFVWELLPTTLVVYFF. The Cytoplasmic portion of the chain corresponds to 314 to 399; sequence RVRNPTKDLT…TLDPDKPSLG (86 aa).

This sequence belongs to the GPR137 family. As to quaternary structure, interaction with RRAGA; increases RRAGA recruitment to lysosomes. Interacts with MTOR; this interaction is amino acid sensitive. As to expression, expressed in kidney, heart, brain and placenta.

The protein resides in the lysosome membrane. Lysosomal integral membrane protein that regulates the localization and activity of mTORC1, a signaling complex promoting cell growth in response to growth factors, energy levels, and amino acids. Interacts with Rag GTPases and increases the lysosomial localization and activity of Rag GTPases and thereby regulates mTORC1 translocation and activity in lysosome. Involved in the regulation of lysosomal morphology and autophagy. Functionally, also acts as a negative regulator of osteoclast activity. Involved in interleukin-4-induced M2 macrophage polarization. The protein is Integral membrane protein GPR137B (GPR137B) of Homo sapiens (Human).